The following is a 261-amino-acid chain: Non-homologous end joining protein Ku 1 (261 aa).

The 160-residue stretch at 12 to 171 (SFSLVAIPVQ…LITLHYSDEV (160 aa)) folds into the Ku domain.

This sequence belongs to the prokaryotic Ku family. In terms of assembly, homodimer. Interacts with LigD.

Its function is as follows. With LigD forms a non-homologous end joining (NHEJ) DNA repair enzyme, which repairs dsDNA breaks with reduced fidelity. Binds linear dsDNA with 5'- and 3'- overhangs but not closed circular dsDNA nor ssDNA. Recruits and stimulates the ligase activity of LigD. The protein is Non-homologous end joining protein Ku 1 of Geotalea uraniireducens (strain Rf4) (Geobacter uraniireducens).